The primary structure comprises 855 residues: Sucrose synthase 5 (855 aa).

A GT-B glycosyltransferase region spans residues 279–758 (SIFNIVIFSI…GLQRICECYT (480 aa)).

Belongs to the glycosyltransferase 1 family. Plant sucrose synthase subfamily. As to expression, predominantly expressed in roots, flowers and immature seeds.

Its subcellular location is the cytoplasm. It localises to the membrane. It carries out the reaction an NDP-alpha-D-glucose + D-fructose = a ribonucleoside 5'-diphosphate + sucrose + H(+). Functionally, sucrose-cleaving enzyme that provides UDP-glucose and fructose for various metabolic pathways. This chain is Sucrose synthase 5 (SUS5), found in Oryza sativa subsp. japonica (Rice).